Reading from the N-terminus, the 220-residue chain is Large ribosomal subunit protein uL3 (220 aa).

The segment at 130–156 (AIKRHGQSRGPMSHGSHFHRAPGSVGM) is disordered.

The protein belongs to the universal ribosomal protein uL3 family. As to quaternary structure, part of the 50S ribosomal subunit. Forms a cluster with proteins L14 and L19.

In terms of biological role, one of the primary rRNA binding proteins, it binds directly near the 3'-end of the 23S rRNA, where it nucleates assembly of the 50S subunit. The protein is Large ribosomal subunit protein uL3 of Staphylococcus aureus (strain Mu3 / ATCC 700698).